The primary structure comprises 432 residues: Enolase (432 aa).

Residue Gln167 coordinates (2R)-2-phosphoglycerate. The active-site Proton donor is the Glu209. The Mg(2+) site is built by Asp246, Glu291, and Asp318. (2R)-2-phosphoglycerate contacts are provided by Lys343, Arg372, Ser373, and Lys394. Catalysis depends on Lys343, which acts as the Proton acceptor.

This sequence belongs to the enolase family. Component of the RNA degradosome, a multiprotein complex involved in RNA processing and mRNA degradation. It depends on Mg(2+) as a cofactor.

It is found in the cytoplasm. The protein resides in the secreted. It localises to the cell surface. It carries out the reaction (2R)-2-phosphoglycerate = phosphoenolpyruvate + H2O. The protein operates within carbohydrate degradation; glycolysis; pyruvate from D-glyceraldehyde 3-phosphate: step 4/5. In terms of biological role, catalyzes the reversible conversion of 2-phosphoglycerate (2-PG) into phosphoenolpyruvate (PEP). It is essential for the degradation of carbohydrates via glycolysis. This is Enolase from Buchnera aphidicola subsp. Cinara cedri (strain Cc).